Here is a 242-residue protein sequence, read N- to C-terminus: Ribose-5-phosphate isomerase A (242 aa).

Residues 39–42 (SGST), 95–98 (DGAD), and 108–111 (KGGG) contribute to the substrate site. The Proton acceptor role is filled by Glu117. Lys135 is a binding site for substrate.

Belongs to the ribose 5-phosphate isomerase family. In terms of assembly, homodimer.

The enzyme catalyses aldehydo-D-ribose 5-phosphate = D-ribulose 5-phosphate. It participates in carbohydrate degradation; pentose phosphate pathway; D-ribose 5-phosphate from D-ribulose 5-phosphate (non-oxidative stage): step 1/1. Catalyzes the reversible conversion of ribose-5-phosphate to ribulose 5-phosphate. The protein is Ribose-5-phosphate isomerase A of Chlamydia trachomatis serovar A (strain ATCC VR-571B / DSM 19440 / HAR-13).